The following is a 406-amino-acid chain: Glutamyl-tRNA reductase (406 aa).

Substrate-binding positions include 51–54 (TCNR), S101, 106–108 (ESE), and Q112. The active-site Nucleophile is C52. Position 180–185 (180–185 (GAGSIG)) interacts with NADP(+).

Belongs to the glutamyl-tRNA reductase family. In terms of assembly, homodimer.

The catalysed reaction is (S)-4-amino-5-oxopentanoate + tRNA(Glu) + NADP(+) = L-glutamyl-tRNA(Glu) + NADPH + H(+). It functions in the pathway porphyrin-containing compound metabolism; protoporphyrin-IX biosynthesis; 5-aminolevulinate from L-glutamyl-tRNA(Glu): step 1/2. Catalyzes the NADPH-dependent reduction of glutamyl-tRNA(Glu) to glutamate 1-semialdehyde (GSA). In Caldivirga maquilingensis (strain ATCC 700844 / DSM 13496 / JCM 10307 / IC-167), this protein is Glutamyl-tRNA reductase.